The following is a 132-amino-acid chain: Large ribosomal subunit protein bL17 (132 aa).

It belongs to the bacterial ribosomal protein bL17 family. As to quaternary structure, part of the 50S ribosomal subunit. Contacts protein L32.

This is Large ribosomal subunit protein bL17 from Shewanella woodyi (strain ATCC 51908 / MS32).